A 404-amino-acid chain; its full sequence is Zinc metalloprotease Rip1 (404 aa).

Residues 1–21 (MMFVTGIVLFALAILISVALH) traverse the membrane as a helical segment. His21 contributes to the Zn(2+) binding site. Residue Glu22 is part of the active site. His25 lines the Zn(2+) pocket. Residues 104 to 124 (PGMNLAICLVLIYAIALVWGL) traverse the membrane as a helical segment. A PDZ domain is found at 121–203 (VWGLPNLHPP…SVPIVVERDG (83 aa)). A Zn(2+)-binding site is contributed by Asp202. The next 2 helical transmembrane spans lie at 313–333 (LWVA…TINL) and 373–393 (LLPA…LTVT).

This sequence belongs to the peptidase M50B family. Requires Zn(2+) as cofactor.

The protein resides in the cell membrane. In terms of biological role, a probable intramembrane site-2 protease (S2P) that cleaves type-2 transmembrane proteins within their membrane-spanning domains. Cleaves PbpB (PBP3, FtsI); cleavage is inhibited by Wag31-PbpB interaction. Probably also cleaves anti-sigma factors RskA, RslA and RsmA. Regulated intramembrane proteolysis (RIP) occurs when an extracytoplasmic signal (possibly oxidative stress) triggers a concerted proteolytic cascade to transmit information and elicit cellular responses. The membrane-spanning regulatory substrate protein (includes anti-sigma factors RskA, RslA, RsmA, and PbpB in M.tuberculosis) is first cut extracytoplasmically (site-1 protease, S1P), then within the membrane itself (site-2 protease, S2P, this entry), while cytoplasmic proteases finish degrading the regulatory protein, liberating the effector protein (ECF sigma factors SigK, SigL and SigM). The chain is Zinc metalloprotease Rip1 (rip1) from Mycobacterium bovis (strain BCG / Pasteur 1173P2).